A 572-amino-acid chain; its full sequence is [Pyruvate dehydrogenase [acetyl-transferring]]-phosphatase 1, mitochondrial (572 aa).

Positions 95 to 122 (NTSGNINMPSPNPKGTETQKSQRSQNDQ) are disordered. Residues 153-543 (RYDVAQLPSN…DDLTVTVAFF (391 aa)) form the PPM-type phosphatase domain. Positions 197, 198, 424, and 480 each coordinate Mn(2+). Residues 470–480 (EAQRPAFRYKD) show a composition bias toward basic and acidic residues. Residues 470–492 (EAQRPAFRYKDNNSSSPSGSNPE) form a disordered region. Residues 481-491 (NNSSSPSGSNP) are compositionally biased toward low complexity.

This sequence belongs to the PP2C family. Mg(2+) is required as a cofactor. Mn(2+) serves as cofactor. In terms of processing, processed by mitochondrial inner membrane protease (IMP) complex and released to the intermembrane space.

It localises to the mitochondrion intermembrane space. The enzyme catalyses O-phospho-L-seryl-[pyruvate dehydrogenase E1 alpha subunit] + H2O = L-seryl-[pyruvate dehydrogenase E1 alpha subunit] + phosphate. Its function is as follows. Catalyzes the dephosphorylation and concomitant reactivation of the E1 alpha subunit (PDA1) of the pyruvate dehydrogenase complex. This Saccharomyces cerevisiae (strain ATCC 204508 / S288c) (Baker's yeast) protein is [Pyruvate dehydrogenase [acetyl-transferring]]-phosphatase 1, mitochondrial (PTC5).